The following is a 355-amino-acid chain: Uroporphyrinogen decarboxylase (355 aa).

Substrate contacts are provided by residues 27–31 (RQAGR), Asp-77, Tyr-154, Thr-209, and His-328.

Belongs to the uroporphyrinogen decarboxylase family. Homodimer.

It is found in the cytoplasm. The catalysed reaction is uroporphyrinogen III + 4 H(+) = coproporphyrinogen III + 4 CO2. Its pathway is porphyrin-containing compound metabolism; protoporphyrin-IX biosynthesis; coproporphyrinogen-III from 5-aminolevulinate: step 4/4. Its function is as follows. Catalyzes the decarboxylation of four acetate groups of uroporphyrinogen-III to yield coproporphyrinogen-III. The polypeptide is Uroporphyrinogen decarboxylase (Vibrio cholerae serotype O1 (strain ATCC 39541 / Classical Ogawa 395 / O395)).